Consider the following 146-residue polypeptide: Cytochrome b5 type B (146 aa).

A propeptide spanning residues 1-11 is cleaved from the precursor; the sequence is MATPEASGSGR. Positions 20 to 96 constitute a Cytochrome b5 heme-binding domain; the sequence is VTYYRLEEVA…LKQYYIGDVH (77 aa). The residue at position 30 (Lys30) is an N6-acetyllysine. Heme contacts are provided by His55 and His79. Ser80 bears the Phosphoserine mark. The chain crosses the membrane as a helical span at residues 119–136; it reads WAYWIVPIVGAILIGFLY.

This sequence belongs to the cytochrome b5 family. In terms of assembly, component of a complex composed of cytochrome b5, NADH-cytochrome b5 reductase (CYB5R3) and MTARC2.

The protein resides in the mitochondrion outer membrane. Cytochrome b5 is a membrane-bound hemoprotein functioning as an electron carrier for several membrane-bound oxygenases. In Rattus norvegicus (Rat), this protein is Cytochrome b5 type B (Cyb5b).